A 104-amino-acid chain; its full sequence is uncharacterized protein (104 aa).

Disordered stretches follow at residues 1-20 (MTET…TTRK) and 83-104 (TASA…VAKK). Positions 83–93 (TASASSSGKKV) are enriched in low complexity. Positions 94 to 104 (VASKKKVVAKK) are enriched in basic residues.

This is an uncharacterized protein from Dictyostelium discoideum (Social amoeba).